A 314-amino-acid polypeptide reads, in one-letter code: GTPase Era (314 aa).

One can recognise an Era-type G domain in the interval 7 to 188 (RCGFAAVIGS…REFIAGLMPE (182 aa)). Residues 15–22 (GSPNAGKS) are G1. 15–22 (GSPNAGKS) is a binding site for GTP. Residues 41–45 (QTTRF) are G2. The G3 stretch occupies residues 62-65 (DTPG). GTP-binding positions include 62-66 (DTPGV) and 138-141 (NKVD). The tract at residues 138–141 (NKVD) is G4. A G5 region spans residues 167–169 (ISA). One can recognise a KH type-2 domain in the interval 219–296 (LHEELPYASM…HLFLNVKVDA (78 aa)).

This sequence belongs to the TRAFAC class TrmE-Era-EngA-EngB-Septin-like GTPase superfamily. Era GTPase family. In terms of assembly, monomer.

The protein resides in the cytoplasm. The protein localises to the cell inner membrane. Functionally, an essential GTPase that binds both GDP and GTP, with rapid nucleotide exchange. Plays a role in 16S rRNA processing and 30S ribosomal subunit biogenesis and possibly also in cell cycle regulation and energy metabolism. The chain is GTPase Era from Maricaulis maris (strain MCS10) (Caulobacter maris).